The following is a 280-amino-acid chain: uncharacterized protein (280 aa).

3 disordered regions span residues 20–41, 170–199, and 251–280; these read DVKKSQQQQQQQPQAPPQQQQQ, INSPPPPQEEEKPQLSKKEEPEWLKGKDKA, and GNSKPYTSSNATNKPFTTASKSTNSYSFSF. The segment covering 25 to 41 has biased composition (low complexity); that stretch reads QQQQQQQPQAPPQQQQQ. The segment covering 178 to 199 has biased composition (basic and acidic residues); the sequence is EEEKPQLSKKEEPEWLKGKDKA.

This is an uncharacterized protein from Dictyostelium discoideum (Social amoeba).